A 294-amino-acid chain; its full sequence is Tryptophan 2,3-dioxygenase 1 (294 aa).

Positions 1–20 (MSEPIQPTRPAASGCPMHGA) are disordered. Residues 63–67 (FIVQH), Y125, and R129 each bind substrate. H252 is a binding site for heme. T266 provides a ligand contact to substrate.

Belongs to the tryptophan 2,3-dioxygenase family. Homotetramer. Heme is required as a cofactor.

The enzyme catalyses L-tryptophan + O2 = N-formyl-L-kynurenine. The protein operates within amino-acid degradation; L-tryptophan degradation via kynurenine pathway; L-kynurenine from L-tryptophan: step 1/2. In terms of biological role, heme-dependent dioxygenase that catalyzes the oxidative cleavage of the L-tryptophan (L-Trp) pyrrole ring and converts L-tryptophan to N-formyl-L-kynurenine. Catalyzes the oxidative cleavage of the indole moiety. The polypeptide is Tryptophan 2,3-dioxygenase 1 (Ralstonia nicotianae (strain ATCC BAA-1114 / GMI1000) (Ralstonia solanacearum)).